Reading from the N-terminus, the 315-residue chain is MIKLGIVMDPIASINIKKDSSFAMLLEAQRRGYELHYMEMADLYLINGEARARTRTLSVEQNYDKWYDFTGEQDLALDSLDAILMRKDPPFDTEFIYATYILERAEEKGTLIVNKPQSLRDCNEKLFTAWFSDLTPETLVTRNKAQLKAFWQKHSDIILKPLDGMGGASIFRVKEGDPNLGVIAETLTEHGTRYCMAQNYLPAIVDGDKRVLVVDGEPVPYCLARIPQGGETRGNLAAGGRGEPRPLTDSDWAIARRIGPTLKAKGLIFVGLDIIGDRLTEINVTSPTCIREIEAEFPISITGMLMDAIEARLQK.

The ATP-grasp domain maps to 125–310 (KLFTAWFSDL…ITGMLMDAIE (186 aa)). Arg-256 carries N-beta-linked (GlcNAc) arginine glycosylation. Positions 281 and 283 each coordinate Mg(2+).

The protein belongs to the prokaryotic GSH synthase family. Mg(2+) is required as a cofactor. Requires Mn(2+) as cofactor. In terms of processing, glycosylation at Arg-256 by NleB enhances the glutathione synthetase activity, leading to an increase in glutathione production. Glycosylation may promote C.rodentium survival in oxidative stress conditions.

The enzyme catalyses gamma-L-glutamyl-L-cysteine + glycine + ATP = glutathione + ADP + phosphate + H(+). Its pathway is sulfur metabolism; glutathione biosynthesis; glutathione from L-cysteine and L-glutamate: step 2/2. The protein is Glutathione synthetase of Citrobacter rodentium.